The sequence spans 313 residues: Small ribosomal subunit biogenesis GTPase RsgA (313 aa).

One can recognise a CP-type G domain in the interval 82–235; the sequence is REKLIAANAT…IIDSPGIQQF (154 aa). Residues 127–130 and 177–185 contribute to the GTP site; these read NKTD and GQSGMGKST. Residues Cys-259, Cys-264, His-266, and Cys-272 each contribute to the Zn(2+) site.

Belongs to the TRAFAC class YlqF/YawG GTPase family. RsgA subfamily. In terms of assembly, monomer. Associates with 30S ribosomal subunit, binds 16S rRNA. Requires Zn(2+) as cofactor.

The protein localises to the cytoplasm. Its function is as follows. One of several proteins that assist in the late maturation steps of the functional core of the 30S ribosomal subunit. Helps release RbfA from mature subunits. May play a role in the assembly of ribosomal proteins into the subunit. Circularly permuted GTPase that catalyzes slow GTP hydrolysis, GTPase activity is stimulated by the 30S ribosomal subunit. This chain is Small ribosomal subunit biogenesis GTPase RsgA, found in Nitrosospira multiformis (strain ATCC 25196 / NCIMB 11849 / C 71).